Reading from the N-terminus, the 61-residue chain is Photosystem II reaction center protein K (61 aa).

Positions Met-1–Ala-24 are excised as a propeptide. A helical transmembrane segment spans residues Met-40–Phe-60.

Belongs to the PsbK family. In terms of assembly, PSII is composed of 1 copy each of membrane proteins PsbA, PsbB, PsbC, PsbD, PsbE, PsbF, PsbH, PsbI, PsbJ, PsbK, PsbL, PsbM, PsbT, PsbX, PsbY, PsbZ, Psb30/Ycf12, at least 3 peripheral proteins of the oxygen-evolving complex and a large number of cofactors. It forms dimeric complexes.

It localises to the plastid. The protein resides in the chloroplast thylakoid membrane. One of the components of the core complex of photosystem II (PSII). PSII is a light-driven water:plastoquinone oxidoreductase that uses light energy to abstract electrons from H(2)O, generating O(2) and a proton gradient subsequently used for ATP formation. It consists of a core antenna complex that captures photons, and an electron transfer chain that converts photonic excitation into a charge separation. In Cucumis sativus (Cucumber), this protein is Photosystem II reaction center protein K.